The chain runs to 667 residues: Coiled-coil domain-containing protein 154 (667 aa).

4 coiled-coil regions span residues 76–182 (VVEL…QEAG), 215–302 (RRVD…GQHE), 384–410 (LLRE…SGHL), and 457–521 (LRGV…KEDN).

It localises to the early endosome. This is Coiled-coil domain-containing protein 154 from Homo sapiens (Human).